A 245-amino-acid chain; its full sequence is Carbohydrate deacetylase (245 aa).

2 residues coordinate Mg(2+): His-61 and His-122.

The protein belongs to the YdjC deacetylase family. The cofactor is Mg(2+).

Its function is as follows. Probably catalyzes the deacetylation of acetylated carbohydrates an important step in the degradation of oligosaccharides. The protein is Carbohydrate deacetylase (celC) of Geobacillus stearothermophilus (Bacillus stearothermophilus).